Reading from the N-terminus, the 431-residue chain is Adenylosuccinate synthetase (431 aa).

Residues 13–19 (GDEGKGK) and 41–43 (GHT) each bind GTP. Residue D14 is the Proton acceptor of the active site. Mg(2+) is bound by residues D14 and G41. Residues 14 to 17 (DEGK), 39 to 42 (NAGH), T130, R144, Q225, T240, and R304 contribute to the IMP site. H42 acts as the Proton donor in catalysis. 300-306 (ATTGRKR) is a binding site for substrate. GTP is bound by residues R306, 332 to 334 (KLD), and 415 to 417 (STG).

The protein belongs to the adenylosuccinate synthetase family. Homodimer. Mg(2+) is required as a cofactor.

It is found in the cytoplasm. It carries out the reaction IMP + L-aspartate + GTP = N(6)-(1,2-dicarboxyethyl)-AMP + GDP + phosphate + 2 H(+). Its pathway is purine metabolism; AMP biosynthesis via de novo pathway; AMP from IMP: step 1/2. Its function is as follows. Plays an important role in the de novo pathway of purine nucleotide biosynthesis. Catalyzes the first committed step in the biosynthesis of AMP from IMP. The sequence is that of Adenylosuccinate synthetase from Shewanella amazonensis (strain ATCC BAA-1098 / SB2B).